A 133-amino-acid polypeptide reads, in one-letter code: Fatty acid-binding protein, heart (133 aa).

Alanine 2 bears the N-acetylalanine mark. Phosphothreonine is present on threonine 8. Phosphotyrosine; by Tyr-kinases is present on tyrosine 20. A Phosphoserine modification is found at serine 23. Threonine 30 is modified (phosphothreonine). The residue at position 83 (serine 83) is a Phosphoserine. 127 to 129 is a (9Z)-octadecenoate binding site; it reads RTY. 127 to 129 is a binding site for hexadecanoate; it reads RTY. 127–129 contributes to the octadecanoate binding site; it reads RTY.

Heart, but also skeletal muscle, kidney, brain and mammary gland.

Its subcellular location is the cytoplasm. In terms of biological role, FABPs are thought to play a role in the intracellular transport of long-chain fatty acids and their acyl-CoA esters. In Rattus norvegicus (Rat), this protein is Fatty acid-binding protein, heart (Fabp3).